A 141-amino-acid polypeptide reads, in one-letter code: Nucleoside diphosphate kinase (141 aa).

ATP-binding residues include Lys11, Phe59, Arg87, Thr93, Arg104, and Asn114. Residue His117 is the Pros-phosphohistidine intermediate of the active site.

This sequence belongs to the NDK family. In terms of assembly, homotetramer. Requires Mg(2+) as cofactor.

The protein localises to the cytoplasm. The catalysed reaction is a 2'-deoxyribonucleoside 5'-diphosphate + ATP = a 2'-deoxyribonucleoside 5'-triphosphate + ADP. The enzyme catalyses a ribonucleoside 5'-diphosphate + ATP = a ribonucleoside 5'-triphosphate + ADP. In terms of biological role, major role in the synthesis of nucleoside triphosphates other than ATP. The ATP gamma phosphate is transferred to the NDP beta phosphate via a ping-pong mechanism, using a phosphorylated active-site intermediate. In Mannheimia succiniciproducens (strain KCTC 0769BP / MBEL55E), this protein is Nucleoside diphosphate kinase.